A 101-amino-acid polypeptide reads, in one-letter code: Iron-sulfur cluster assembly protein CyaY (101 aa).

It belongs to the frataxin family.

Involved in iron-sulfur (Fe-S) cluster assembly. May act as a regulator of Fe-S biogenesis. This chain is Iron-sulfur cluster assembly protein CyaY, found in Rickettsia felis (strain ATCC VR-1525 / URRWXCal2) (Rickettsia azadi).